Reading from the N-terminus, the 741-residue chain is Transketolase, chloroplastic (741 aa).

Residues 1–67 constitute a chloroplast transit peptide; that stretch reads MASSSSLTLS…TKQQFSVRAS (67 aa). His103 is a binding site for substrate. Thiamine diphosphate is bound by residues His143 and 192-194; that span reads GPL. Asp233 is a Mg(2+) binding site. Residues Gly234 and Asn263 each contribute to the thiamine diphosphate site. 2 residues coordinate Mg(2+): Asn263 and Ile265. Residues His340, Arg434, and Ser461 each coordinate substrate. Position 340 (His340) interacts with thiamine diphosphate. Thiamine diphosphate is bound by residues Glu488 and Phe515. The active-site Proton donor is Glu488. Residues His539, Asp547, and Arg598 each coordinate substrate.

It belongs to the transketolase family. As to quaternary structure, homodimer. Mg(2+) serves as cofactor. Requires Ca(2+) as cofactor. The cofactor is Mn(2+). It depends on Co(2+) as a cofactor. Thiamine diphosphate is required as a cofactor.

The protein localises to the plastid. It is found in the chloroplast thylakoid membrane. The enzyme catalyses D-sedoheptulose 7-phosphate + D-glyceraldehyde 3-phosphate = aldehydo-D-ribose 5-phosphate + D-xylulose 5-phosphate. Its pathway is carbohydrate biosynthesis; Calvin cycle. Functionally, catalyzes the reversible transfer of a two-carbon ketol group from fructose-6-phosphate or sedoheptulose-7-phosphate to glyceraldehyde-3-phosphate to yield xylulose-5-phosphate and erythrose-4-phosphate or ribose-5-phosphate, respectively. The sequence is that of Transketolase, chloroplastic from Solanum tuberosum (Potato).